The following is a 44-amino-acid chain: Thymosin beta (44 aa).

A compositionally biased stretch (basic and acidic residues) spans 1-17; the sequence is MSDKPDVKEVESFDKTT. Residues 1 to 44 are disordered; sequence MSDKPDVKEVESFDKTTLKKTTTNEKNTLPTKEVIEQEKSGGSD. Low complexity predominate over residues 19–32; the sequence is KKTTTNEKNTLPTK. The span at 33 to 44 shows a compositional bias: basic and acidic residues; the sequence is EVIEQEKSGGSD.

This sequence belongs to the thymosin beta family.

The protein resides in the cytoplasm. It localises to the cytoskeleton. Functionally, plays an important role in the organization of the cytoskeleton. Binds to and sequesters actin monomers (G actin) and therefore inhibits actin polymerization. This chain is Thymosin beta, found in Gillichthys mirabilis (Long-jawed mudsucker).